We begin with the raw amino-acid sequence, 1173 residues long: Protein GIGANTEA (1173 aa).

Disordered regions lie at residues 150–187 (EQQN…RKPL), 604–641 (SGSK…NVKG), and 840–863 (SRTE…SGRP). Composition is skewed to polar residues over residues 162–172 (SKATTSGSPTS) and 613–633 (YAST…QTAN). Residues 854 to 863 (RHSDEGSGRP) are compositionally biased toward basic and acidic residues.

The protein belongs to the GIGANTEA family. As to quaternary structure, interacts with SPY. Interacts with ADO1 (via N-terminus) and ADO2. Interacts with ADO3 (via N-terminus). Interacts (via N-terminus) with CDF1. Interacts (via N-terminus) with TCP4. As to expression, widely expressed with highest levels in inflorescence apices, young flowers and young siliques.

The protein localises to the nucleus. The protein resides in the cytoplasm. Involved in regulation of circadian rhythm and photoperiodic flowering. May play a role in maintenance of circadian amplitude and period length. Is involved in phytochrome B signaling. Stabilizes ADO3 and the circadian photoreceptor ADO1/ZTL. Regulates 'CONSTANS' (CO) in the long-day flowering pathway by modulating the ADO3-dependent protein stability of CDF1 and CDF2, but is not essential to activate CO transcription. Regulates, via the microRNA miR172, a CO-independent pathway that promotes photoperiodic flowering by inducing 'FLOWERING LOCUS T'. The polypeptide is Protein GIGANTEA (GI) (Arabidopsis thaliana (Mouse-ear cress)).